The primary structure comprises 421 residues: Protein MID1-COMPLEMENTING ACTIVITY 1 (421 aa).

Positions 188–218 (RFCEALKTENEKLQIELQRSQEHYDVAQCEV) form a coiled coil. Residues 233-288 (EPDSEKELTKKASKKSERSSSMKTEYSYDEDSPKKSSTRAASRSTSNVSSGHDLLS) are disordered. Positions 235–252 (DSEKELTKKASKKSERSS) are enriched in basic and acidic residues. The segment covering 270–282 (TRAASRSTSNVSS) has biased composition (low complexity). A helical membrane pass occupies residues 346 to 362 (LMAYSLILSCCCYTCCV).

Expressed in roots, leaves, stems, flowers and siliques. Expressed in vascular tissues of cotyledons, leaves and primary root, in the promeristem and adjacent elongation zone of the primary root and in the shoot apical meristem. Detected in the stele and endodermis, but not in the cortex, epidermis or root cap, including the columella. Not expressed in root hairs or in mesophyll cells of leaves and cotyledons.

Its subcellular location is the cell membrane. Its activity is regulated as follows. Inhibited by GdCl(3), but not by verapamil. Functionally, calcium-permeable stretch-activated channel component. Involved in mechano-stimulated calcium uptake mechanism and in mechanosensing in the primary root. This chain is Protein MID1-COMPLEMENTING ACTIVITY 1 (MCA1), found in Arabidopsis thaliana (Mouse-ear cress).